The chain runs to 526 residues: Lysine--tRNA ligase (526 aa).

2 residues coordinate Mg(2+): glutamate 431 and glutamate 438.

This sequence belongs to the class-II aminoacyl-tRNA synthetase family. As to quaternary structure, homodimer. It depends on Mg(2+) as a cofactor.

Its subcellular location is the cytoplasm. The catalysed reaction is tRNA(Lys) + L-lysine + ATP = L-lysyl-tRNA(Lys) + AMP + diphosphate. This Chlamydia trachomatis serovar L2b (strain UCH-1/proctitis) protein is Lysine--tRNA ligase.